Consider the following 74-residue polypeptide: Ubiquitin-like protein FUBI (74 aa).

The protein belongs to the ubiquitin family.

This chain is Ubiquitin-like protein FUBI (FAU), found in Bos taurus (Bovine).